The following is a 339-amino-acid chain: Heat-inducible transcription repressor HrcA (339 aa).

It belongs to the HrcA family.

Negative regulator of class I heat shock genes (grpE-dnaK-dnaJ and groELS operons). Prevents heat-shock induction of these operons. The protein is Heat-inducible transcription repressor HrcA of Methylobacillus flagellatus (strain ATCC 51484 / DSM 6875 / VKM B-1610 / KT).